The sequence spans 786 residues: LPS-assembly protein LptD (786 aa).

The first 39 residues, Met-1–Ala-39, serve as a signal peptide directing secretion. The tract at residues Pro-767 to Glu-786 is disordered. Positions Thr-770–Met-779 are enriched in pro residues.

This sequence belongs to the LptD family. As to quaternary structure, component of the lipopolysaccharide transport and assembly complex. Interacts with LptE and LptA.

The protein localises to the cell outer membrane. Together with LptE, is involved in the assembly of lipopolysaccharide (LPS) at the surface of the outer membrane. The protein is LPS-assembly protein LptD of Burkholderia cenocepacia (strain HI2424).